We begin with the raw amino-acid sequence, 189 residues long: Peptidyl-tRNA hydrolase (189 aa).

Residue Tyr14 coordinates tRNA. Catalysis depends on His19, which acts as the Proton acceptor. 3 residues coordinate tRNA: Tyr64, Asn66, and Asn112.

The protein belongs to the PTH family. Monomer.

The protein resides in the cytoplasm. The enzyme catalyses an N-acyl-L-alpha-aminoacyl-tRNA + H2O = an N-acyl-L-amino acid + a tRNA + H(+). Functionally, hydrolyzes ribosome-free peptidyl-tRNAs (with 1 or more amino acids incorporated), which drop off the ribosome during protein synthesis, or as a result of ribosome stalling. In terms of biological role, catalyzes the release of premature peptidyl moieties from peptidyl-tRNA molecules trapped in stalled 50S ribosomal subunits, and thus maintains levels of free tRNAs and 50S ribosomes. This Dehalococcoides mccartyi (strain CBDB1) protein is Peptidyl-tRNA hydrolase.